A 176-amino-acid polypeptide reads, in one-letter code: MEASRFIEIGLLTRPHGLKGEVCVDYYADSPFLLEGTVYLKAGRAAPRPVKVQSMRMHKGRPLVIFEGVNDRTAAELLRGHVMLVPEDTLPELDEDEVYLFELEGISVVIDESGEHLGVIERIDTDAYQEIWVIRTPQGKEVLFPAAAPFVLDIDLDSRTARIAPPPGLLDIYLSD.

Residues 95-169 (EDEVYLFELE…TARIAPPPGL (75 aa)) enclose the PRC barrel domain.

Belongs to the RimM family. In terms of assembly, binds ribosomal protein uS19.

Its subcellular location is the cytoplasm. Functionally, an accessory protein needed during the final step in the assembly of 30S ribosomal subunit, possibly for assembly of the head region. Essential for efficient processing of 16S rRNA. May be needed both before and after RbfA during the maturation of 16S rRNA. It has affinity for free ribosomal 30S subunits but not for 70S ribosomes. The polypeptide is Ribosome maturation factor RimM (Nitratidesulfovibrio vulgaris (strain ATCC 29579 / DSM 644 / CCUG 34227 / NCIMB 8303 / VKM B-1760 / Hildenborough) (Desulfovibrio vulgaris)).